Here is a 385-residue protein sequence, read N- to C-terminus: V-type proton ATPase subunit C (385 aa).

It belongs to the V-ATPase C subunit family. In terms of assembly, V-ATPase is a heteromultimeric enzyme made up of two complexes: the ATP-hydrolytic V1 complex and the proton translocation V0 complex. The V1 complex consists of three catalytic AB heterodimers that form a heterohexamer, three peripheral stalks each consisting of EG heterodimers, one central rotor including subunits D and F, and the regulatory subunits C and H. The proton translocation complex V0 consists of the proton transport subunit a, a ring of proteolipid subunits c9c'', rotary subunit d, subunits e and f, and the accessory subunits VhaAC45 and ATP6AP2.

Its function is as follows. Subunit of the V1 complex of vacuolar(H+)-ATPase (V-ATPase), a multisubunit enzyme composed of a peripheral complex (V1) that hydrolyzes ATP and a membrane integral complex (V0) that translocates protons. V-ATPase is responsible for acidifying and maintaining the pH of intracellular compartments and in some cell types, is targeted to the plasma membrane, where it is responsible for acidifying the extracellular environment. Subunit C is necessary for the assembly of the catalytic sector of the enzyme and is likely to have a specific function in its catalytic activity. The chain is V-type proton ATPase subunit C from Manduca sexta (Tobacco hawkmoth).